The sequence spans 371 residues: Protein STRICTOSIDINE SYNTHASE-LIKE 7 (371 aa).

The N-terminal stretch at 1-25 (MPVLFSSRSLILSIIVPLLISIALY) is a signal peptide. N-linked (GlcNAc...) asparagine glycosylation is found at Asn101, Asn137, and Asn285. Tyr303 carries the phosphotyrosine modification.

Belongs to the strictosidine synthase family.

The protein resides in the vacuole. This is Protein STRICTOSIDINE SYNTHASE-LIKE 7 from Arabidopsis thaliana (Mouse-ear cress).